The chain runs to 416 residues: NADH-quinone oxidoreductase subunit H (416 aa).

The next 9 helical transmembrane spans lie at 16–36, 84–104, 124–144, 165–185, 197–217, 260–280, 288–308, 320–340, and 353–373; these read LILA…LAAI, PVYL…FAVI, LAVA…GIVL, VVSY…YAGT, STWY…SMVG, VSAL…PISL, WWPL…YIWL, FMAI…MIVA, and WASG…VILW.

This sequence belongs to the complex I subunit 1 family. NDH-1 is composed of 14 different subunits. Subunits NuoA, H, J, K, L, M, N constitute the membrane sector of the complex.

Its subcellular location is the cell membrane. The catalysed reaction is a quinone + NADH + 5 H(+)(in) = a quinol + NAD(+) + 4 H(+)(out). Functionally, NDH-1 shuttles electrons from NADH, via FMN and iron-sulfur (Fe-S) centers, to quinones in the respiratory chain. The immediate electron acceptor for the enzyme in this species is believed to be menaquinone. Couples the redox reaction to proton translocation (for every two electrons transferred, four hydrogen ions are translocated across the cytoplasmic membrane), and thus conserves the redox energy in a proton gradient. This subunit may bind ubiquinone. This is NADH-quinone oxidoreductase subunit H from Mycobacterium sp. (strain KMS).